The sequence spans 807 residues: DNA gyrase subunit B (807 aa).

The 115-residue stretch at Ser-429–Pro-543 folds into the Toprim domain. Residues Glu-435, Asp-508, and Asp-510 each contribute to the Mg(2+) site.

It belongs to the type II topoisomerase GyrB family. In terms of assembly, heterotetramer, composed of two GyrA and two GyrB chains. In the heterotetramer, GyrA contains the active site tyrosine that forms a transient covalent intermediate with DNA, while GyrB binds cofactors and catalyzes ATP hydrolysis. Mg(2+) is required as a cofactor. It depends on Mn(2+) as a cofactor. The cofactor is Ca(2+).

Its subcellular location is the cytoplasm. It catalyses the reaction ATP-dependent breakage, passage and rejoining of double-stranded DNA.. Its function is as follows. A type II topoisomerase that negatively supercoils closed circular double-stranded (ds) DNA in an ATP-dependent manner to modulate DNA topology and maintain chromosomes in an underwound state. Negative supercoiling favors strand separation, and DNA replication, transcription, recombination and repair, all of which involve strand separation. Also able to catalyze the interconversion of other topological isomers of dsDNA rings, including catenanes and knotted rings. Type II topoisomerases break and join 2 DNA strands simultaneously in an ATP-dependent manner. This chain is DNA gyrase subunit B, found in Rickettsia conorii (strain ATCC VR-613 / Malish 7).